The following is a 253-amino-acid chain: 4-hydroxy-tetrahydrodipicolinate reductase (253 aa).

Residues 8 to 13 (GAKGRM), D34, 76 to 78 (GTT), and 108 to 111 (APNF) each bind NAD(+). Residue H138 is the Proton donor/acceptor of the active site. (S)-2,3,4,5-tetrahydrodipicolinate is bound at residue H139. The Proton donor role is filled by K142. Position 148 to 149 (148 to 149 (GT)) interacts with (S)-2,3,4,5-tetrahydrodipicolinate.

It belongs to the DapB family.

It is found in the cytoplasm. It carries out the reaction (S)-2,3,4,5-tetrahydrodipicolinate + NAD(+) + H2O = (2S,4S)-4-hydroxy-2,3,4,5-tetrahydrodipicolinate + NADH + H(+). The enzyme catalyses (S)-2,3,4,5-tetrahydrodipicolinate + NADP(+) + H2O = (2S,4S)-4-hydroxy-2,3,4,5-tetrahydrodipicolinate + NADPH + H(+). It functions in the pathway amino-acid biosynthesis; L-lysine biosynthesis via DAP pathway; (S)-tetrahydrodipicolinate from L-aspartate: step 4/4. In terms of biological role, catalyzes the conversion of 4-hydroxy-tetrahydrodipicolinate (HTPA) to tetrahydrodipicolinate. The protein is 4-hydroxy-tetrahydrodipicolinate reductase of Bifidobacterium animalis subsp. lactis (strain AD011).